Here is a 913-residue protein sequence, read N- to C-terminus: Rab GTPase-activating protein tbc-8 (913 aa).

The tract at residues 1 to 24 (MQMFRHSSADMWRAKKPTLERRST) is disordered. The region spanning 106 to 240 (NLNSPYVTSL…TYRRMSNRIE (135 aa)) is the RUN domain. Residues 597–844 (INTKEVRRMA…KVWEVIWAAQ (248 aa)) enclose the Rab-GAP TBC domain.

Belongs to the RUTBC family. Interacts with rab-19. Interacts with ric-19; the interaction is direct and may be required for the activation of rab-2 and dense vesicle maturation in cholinergic motoneurons. Interacts (via RUN domain) with rund-1. Does not interact with unc-108 (GTP-bound form). Expressed in neurons in the head, tail and ventral nerve cord (at protein level).

The protein resides in the golgi apparatus. It is found in the trans-Golgi network. Its subcellular location is the early endosome. The protein localises to the cytoplasmic vesicle membrane. Functionally, interacts with numerous Rab family members, functioning as Rab effector for some, and as GTPase activator for others. GTPase activator for rab-2. In association with ric-19 activates rab-2 during dense core vesicle maturation in cholinergic motoneurons. This is Rab GTPase-activating protein tbc-8 from Caenorhabditis elegans.